We begin with the raw amino-acid sequence, 367 residues long: Aminomethyltransferase (367 aa).

Belongs to the GcvT family. As to quaternary structure, the glycine cleavage system is composed of four proteins: P, T, L and H.

The catalysed reaction is N(6)-[(R)-S(8)-aminomethyldihydrolipoyl]-L-lysyl-[protein] + (6S)-5,6,7,8-tetrahydrofolate = N(6)-[(R)-dihydrolipoyl]-L-lysyl-[protein] + (6R)-5,10-methylene-5,6,7,8-tetrahydrofolate + NH4(+). In terms of biological role, the glycine cleavage system catalyzes the degradation of glycine. The protein is Aminomethyltransferase of Mycobacterium avium (strain 104).